A 413-amino-acid chain; its full sequence is Gamma-glutamyl phosphate reductase (413 aa).

Belongs to the gamma-glutamyl phosphate reductase family.

The protein localises to the cytoplasm. It catalyses the reaction L-glutamate 5-semialdehyde + phosphate + NADP(+) = L-glutamyl 5-phosphate + NADPH + H(+). It participates in amino-acid biosynthesis; L-proline biosynthesis; L-glutamate 5-semialdehyde from L-glutamate: step 2/2. Functionally, catalyzes the NADPH-dependent reduction of L-glutamate 5-phosphate into L-glutamate 5-semialdehyde and phosphate. The product spontaneously undergoes cyclization to form 1-pyrroline-5-carboxylate. This Caulobacter vibrioides (strain ATCC 19089 / CIP 103742 / CB 15) (Caulobacter crescentus) protein is Gamma-glutamyl phosphate reductase.